The primary structure comprises 178 residues: ATP synthase subunit delta (178 aa).

The protein belongs to the ATPase delta chain family. F-type ATPases have 2 components, F(1) - the catalytic core - and F(0) - the membrane proton channel. F(1) has five subunits: alpha(3), beta(3), gamma(1), delta(1), epsilon(1). F(0) has three main subunits: a(1), b(2) and c(10-14). The alpha and beta chains form an alternating ring which encloses part of the gamma chain. F(1) is attached to F(0) by a central stalk formed by the gamma and epsilon chains, while a peripheral stalk is formed by the delta and b chains.

Its subcellular location is the cell membrane. F(1)F(0) ATP synthase produces ATP from ADP in the presence of a proton or sodium gradient. F-type ATPases consist of two structural domains, F(1) containing the extramembraneous catalytic core and F(0) containing the membrane proton channel, linked together by a central stalk and a peripheral stalk. During catalysis, ATP synthesis in the catalytic domain of F(1) is coupled via a rotary mechanism of the central stalk subunits to proton translocation. Functionally, this protein is part of the stalk that links CF(0) to CF(1). It either transmits conformational changes from CF(0) to CF(1) or is implicated in proton conduction. In Streptococcus pyogenes serotype M4 (strain MGAS10750), this protein is ATP synthase subunit delta.